The sequence spans 672 residues: Transcriptional activator of sulfur metabolism MET4 (672 aa).

Positions 1-10 (MKQEQSHEGD) are enriched in basic and acidic residues. Positions 1 to 44 (MKQEQSHEGDSYSTEFINLFGKDTATHPSSNNGANNNGMGSTNS) are disordered. Over residues 29–44 (SSNNGANNNGMGSTNS) the composition is skewed to low complexity. Short sequence motifs (9aaTAD) lie at residues 89–97 (ILLEQLAYV), 102–110 (PSLDNEFSN), and 109–117 (SNVDWNVNT). The interval 95–144 (AYVDNFIPSLDNEFSNVDWNVNTTHNNANNNGADTFSSINANPFDLDEQL) is transcriptional activation. 2 disordered regions span residues 157–265 (IFPD…NMTS) and 299–347 (TTHT…NITV). The span at 165–174 (SNNNNNSNNG) shows a compositional bias: low complexity. Over residues 175 to 188 (NDDHSNHDVLHEDP) the composition is skewed to basic and acidic residues. The tract at residues 188 to 235 (PSTNNRQRNPHFLTQRRNTFLTSQYDQSKSRFSSKNKRNGNNGETNNF) is inhibitory region; AdoMet responsiveness; required for interaction with MET30. Polar residues predominate over residues 202–214 (QRRNTFLTSQYDQ). Residues 226-238 (NGNNGETNNFGDN) are compositionally biased toward low complexity. Composition is skewed to polar residues over residues 251–265 (GSPS…NMTS) and 301–321 (HTPN…SSSQ). The interval 312 to 375 (VTSAQNSSSQ…NVPNGAYNSL (64 aa)) is auxiliary; required for high transcriptional activity under nonrepressive growth conditions. The interval 375 to 403 (LISAGFDNDQIDAIAAIMAYHHQKKIREN) is required for interaction with MET31 and MET32. S416 carries the phosphoserine modification. Residues 475–574 (PKSNNIHNQR…DNEDDEYDDA (100 aa)) form a disordered region. Polar residues predominate over residues 477–486 (SNNIHNQRQP). Positions 487 to 498 (SRNDHKISRESD) are enriched in basic and acidic residues. Positions 499 to 512 (GNNGNDNVHHNNAV) are enriched in low complexity. 2 stretches are compositionally biased toward basic and acidic residues: residues 519–528 (RGDEIAKIRS) and 537–565 (SDHK…KYSD). S564 is subject to Phosphoserine. A bZIP domain is found at 586–649 (KKELGDDDED…KLLKNLVLSS (64 aa)). Positions 601–612 (KKSHQKKKLKEK) are basic motif. A coiled-coil region spans residues 609 to 648 (LKEKELESSIHELTEIAASLQKRIHTLETENKLLKNLVLS). The leucine-zipper stretch occupies residues 614–642 (LESSIHELTEIAASLQKRIHTLETENKLL).

Belongs to the bZIP family. As to quaternary structure, interacts with MET30. Tethered to DNA through two alternate complexes associating MET4 with MET28 and either MET31 or MET32. Interacts with MET28 and CBF1 through its leucine zipper to form a heteromeric complex.

It is found in the nucleus. Positive trans-acting factor capable of stimulating the transcription of the MET genes from the methionine biosynthetic pathway. MET4, MET28 and CBF1 are required for full induction of MET25 and MET16 gene transcription. MET4 controls as well the derepression of MET6. Required for the transcription of genes necessary for sulfur amino acid biosynthesis. Involved in the transcription activation of MET28 and MET30. Required for MET3 gene expression via assembly of the MET4-MET28-MET31 and MET4-MET28-MET32 complexes. Involved in response to cadmium and arsenic. Cadmium-activated MET4 also induces glutathione biosynthesis. This is Transcriptional activator of sulfur metabolism MET4 (MET4) from Saccharomyces cerevisiae (strain ATCC 204508 / S288c) (Baker's yeast).